A 250-amino-acid chain; its full sequence is Bis(5'-nucleosyl)-tetraphosphatase PrpE [asymmetrical] (250 aa).

The protein belongs to the PrpE family. Requires Ni(2+) as cofactor.

The enzyme catalyses P(1),P(4)-bis(5'-guanosyl) tetraphosphate + H2O = GMP + GTP + 2 H(+). Functionally, asymmetrically hydrolyzes Ap4p to yield AMP and ATP. The polypeptide is Bis(5'-nucleosyl)-tetraphosphatase PrpE [asymmetrical] (Oceanobacillus iheyensis (strain DSM 14371 / CIP 107618 / JCM 11309 / KCTC 3954 / HTE831)).